Consider the following 557-residue polypeptide: Formate--tetrahydrofolate ligase (557 aa).

65-72 is a binding site for ATP; it reads TPAGEGKT.

It belongs to the formate--tetrahydrofolate ligase family.

It catalyses the reaction (6S)-5,6,7,8-tetrahydrofolate + formate + ATP = (6R)-10-formyltetrahydrofolate + ADP + phosphate. Its pathway is one-carbon metabolism; tetrahydrofolate interconversion. This chain is Formate--tetrahydrofolate ligase, found in Methylorubrum populi (strain ATCC BAA-705 / NCIMB 13946 / BJ001) (Methylobacterium populi).